The sequence spans 352 residues: MSERVNVAILGASGYTGAELVRLLARHPRVTLAALTANRKAGQAFASVFPHLGGLDLPVLSTIEAVDWSAIDFVFCALPHGTTQTIIGDLLNGPHGGRLRIADLSADFRLADPMVYQTWYGHAHEAVELQKEAVYGLTEINRAAIATARLVAVPGCYPTSAQLPLIPLLRAGLIDPDAIIIDAKSGASGAGRDAKEGSLHCEVSEGIHAYGVGTHRHGPEIEQGLSLAVGRPVAVTFTPHLMPMNRGILSTIYLRATAGNDATTLRQALSAAYADEAFVRVVPEGVSPHTRHVRGSNFVLIGVHADRVPGRVIVTCVEDNLVKGASGQAIQDMNVMLGFPETLGLDQQPLFP.

Cys-156 is a catalytic residue.

Belongs to the NAGSA dehydrogenase family. Type 1 subfamily.

It localises to the cytoplasm. It catalyses the reaction N-acetyl-L-glutamate 5-semialdehyde + phosphate + NADP(+) = N-acetyl-L-glutamyl 5-phosphate + NADPH + H(+). Its pathway is amino-acid biosynthesis; L-arginine biosynthesis; N(2)-acetyl-L-ornithine from L-glutamate: step 3/4. Catalyzes the NADPH-dependent reduction of N-acetyl-5-glutamyl phosphate to yield N-acetyl-L-glutamate 5-semialdehyde. This Rhodospirillum rubrum (strain ATCC 11170 / ATH 1.1.1 / DSM 467 / LMG 4362 / NCIMB 8255 / S1) protein is N-acetyl-gamma-glutamyl-phosphate reductase.